A 323-amino-acid polypeptide reads, in one-letter code: Palmitoyltransferase ZDHHC20-B (323 aa).

The Cytoplasmic segment spans residues 1–14 (MAPTHVLRCCQRGL). Residues 15–35 (AWIPVIFIALVVCWSYYAYVV) traverse the membrane as a helical segment. Residues 36 to 41 (ELCLLV) are Lumenal-facing. A helical membrane pass occupies residues 42–62 (YLVVFHLSFVMFVWSYWKTIF). Residues 63-157 (TKPANPSKEF…NNCVGFSNYK (95 aa)) lie on the Cytoplasmic side of the membrane. A DHHC domain is found at 114–164 (RYCDRCQVIKPDRCHHCSACDMCVLKMDHHCPWVNNCVGFSNYKFFILFLT). C144 acts as the S-palmitoyl cysteine intermediate in catalysis. The helical transmembrane segment at 158–178 (FFILFLTYSLVYCLFIAASVL) threads the bilayer. The Lumenal segment spans residues 179-195 (QYFIKFWTSDLPESHAK). A helical membrane pass occupies residues 196–219 (FHVLFLFFVAAMFCISILSLFTYH). Residues 220–323 (LWLVGKNRST…KQAKKKKTDE (104 aa)) are Cytoplasmic-facing.

The protein belongs to the DHHC palmitoyltransferase family.

The protein localises to the golgi apparatus membrane. The protein resides in the cell membrane. It localises to the cytoplasm. Its subcellular location is the perinuclear region. It is found in the endoplasmic reticulum membrane. The protein localises to the endoplasmic reticulum-Golgi intermediate compartment membrane. It carries out the reaction L-cysteinyl-[protein] + hexadecanoyl-CoA = S-hexadecanoyl-L-cysteinyl-[protein] + CoA. The catalysed reaction is L-cysteinyl-[protein] + tetradecanoyl-CoA = S-tetradecanoyl-L-cysteinyl-[protein] + CoA. The enzyme catalyses L-cysteinyl-[protein] + octadecanoyl-CoA = S-octadecanoyl-L-cysteinyl-[protein] + CoA. Palmitoyltransferase that could catalyze the addition of palmitate onto various protein substrates. Catalyzes palmitoylation of Cys residues on protein substrates and has a preference for acyl-CoA with C16 fatty acid chains but may also utilize acyl-CoA with C14 and C18 fatty acid chains. The chain is Palmitoyltransferase ZDHHC20-B (zdhhc20b) from Danio rerio (Zebrafish).